A 944-amino-acid chain; its full sequence is E3 ubiquitin-protein ligase HACE1 (944 aa).

ANK repeat units follow at residues 23-55 (LPED…NSKF), 64-93 (VKRS…DPNY), 97-126 (SGCT…DVNI), 130-159 (EGLT…NVDV), 163-192 (MGQT…DINR), 196-226 (SGAT…YLPD), and 228-253 (NGVT…QHHP). Residues 609 to 944 (NCEKLKQGIA…HCGSYGYTMA (336 aa)) enclose the HECT domain. Catalysis depends on C911, which acts as the Glycyl thioester intermediate.

It is found in the golgi apparatus. The protein localises to the golgi stack membrane. Its subcellular location is the cytoplasm. The protein resides in the endoplasmic reticulum. The enzyme catalyses S-ubiquitinyl-[E2 ubiquitin-conjugating enzyme]-L-cysteine + [acceptor protein]-L-lysine = [E2 ubiquitin-conjugating enzyme]-L-cysteine + N(6)-ubiquitinyl-[acceptor protein]-L-lysine.. The protein operates within protein modification; protein ubiquitination. In terms of biological role, E3 ubiquitin-protein ligase involved in Golgi membrane fusion and regulation of small GTPases. Acts as a regulator of Golgi membrane dynamics during the cell cycle: recruited to Golgi membrane by Rab proteins and regulates postmitotic Golgi membrane fusion. Acts by mediating ubiquitination during mitotic Golgi disassembly, ubiquitination serving as a signal for Golgi reassembly later, after cell division. In Xenopus laevis (African clawed frog), this protein is E3 ubiquitin-protein ligase HACE1 (hace1).